Consider the following 470-residue polypeptide: Uronate isomerase (470 aa).

The protein belongs to the metallo-dependent hydrolases superfamily. Uronate isomerase family.

It catalyses the reaction D-glucuronate = D-fructuronate. It carries out the reaction aldehydo-D-galacturonate = keto-D-tagaturonate. The protein operates within carbohydrate metabolism; pentose and glucuronate interconversion. This is Uronate isomerase from Salmonella arizonae (strain ATCC BAA-731 / CDC346-86 / RSK2980).